The sequence spans 234 residues: Purine nucleoside phosphorylase DeoD-type (234 aa).

Position 4 (histidine 4) interacts with a purine D-ribonucleoside. Phosphate-binding positions include glycine 20, arginine 24, arginine 43, and 87 to 90; that span reads RIGT. A purine D-ribonucleoside is bound by residues 179-181 and 203-204; these read EME and SD. The active-site Proton donor is the aspartate 204.

The protein belongs to the PNP/UDP phosphorylase family. In terms of assembly, homohexamer; trimer of homodimers.

It carries out the reaction a purine D-ribonucleoside + phosphate = a purine nucleobase + alpha-D-ribose 1-phosphate. It catalyses the reaction a purine 2'-deoxy-D-ribonucleoside + phosphate = a purine nucleobase + 2-deoxy-alpha-D-ribose 1-phosphate. In terms of biological role, catalyzes the reversible phosphorolytic breakdown of the N-glycosidic bond in the beta-(deoxy)ribonucleoside molecules, with the formation of the corresponding free purine bases and pentose-1-phosphate. The protein is Purine nucleoside phosphorylase DeoD-type of Helicobacter pylori (strain Shi470).